Reading from the N-terminus, the 286-residue chain is 33 kDa chaperonin (286 aa).

Intrachain disulfides connect C225-C227 and C258-C261.

The protein belongs to the HSP33 family. Post-translationally, under oxidizing conditions two disulfide bonds are formed involving the reactive cysteines. Under reducing conditions zinc is bound to the reactive cysteines and the protein is inactive.

The protein localises to the cytoplasm. Its function is as follows. Redox regulated molecular chaperone. Protects both thermally unfolding and oxidatively damaged proteins from irreversible aggregation. Plays an important role in the bacterial defense system toward oxidative stress. This Shewanella loihica (strain ATCC BAA-1088 / PV-4) protein is 33 kDa chaperonin.